Here is a 2465-residue protein sequence, read N- to C-terminus: Highly reducing polyketide synthase milA (2465 aa).

One can recognise a Ketosynthase family 3 (KS3) domain in the interval 1-434 (MEPIAIVGSA…GANCHVILEG (434 aa)). Active-site for beta-ketoacyl synthase activity residues include cysteine 172, histidine 311, and histidine 355. Positions 450–476 (KPSLSSSPSLSPTSTSPPTPRTPANSL) are disordered. Positions 451–463 (PSLSSSPSLSPTS) are enriched in low complexity. Positions 567 to 888 (VFTGQGAQWA…CGTLSRAVDD (322 aa)) are malonyl-CoA:ACP transacylase (MAT) domain. The N-terminal hotdog fold stretch occupies residues 957-1096 (HPLLGVRTNT…GKVQLFVGGD (140 aa)). The segment at 957-1265 (HPLLGVRTNT…LTVSPVAPVT (309 aa)) is dehydratase (DH) domain. Residues 957-1267 (HPLLGVRTNT…VSPVAPVTAD (311 aa)) enclose the PKS/mFAS DH domain. The Proton acceptor; for dehydratase activity role is filled by histidine 989. The C-terminal hotdog fold stretch occupies residues 1111–1267 (LNEIDVDTFY…VSPVAPVTAD (157 aa)). Aspartate 1174 functions as the Proton donor; for dehydratase activity in the catalytic mechanism. The segment at 1334–1367 (HSTNGLTNGHASTNGHGSTNGHISTNGHSTNGDV) is disordered. The tract at residues 2095 to 2269 (TYFLVGMAGS…AASVINLTGV (175 aa)) is ketoreductase (KR)domain. In terms of domain architecture, Carrier spans 2384–2459 (DMIFRAFQTV…QVVWSVVHQI (76 aa)). An O-(pantetheine 4'-phosphoryl)serine modification is found at serine 2419.

It depends on pantetheine 4'-phosphate as a cofactor.

It carries out the reaction 10 malonyl-CoA + acetyl-CoA + 3 AH2 + 8 NADPH + 18 H(+) = cordypyrone A + 3 A + 10 CO2 + 8 NADP(+) + 11 CoA + 8 H2O. The protein operates within secondary metabolite biosynthesis. Highly reducing polyketide synthase (HR-PKS); part of the gene cluster that mediates the biosynthesis of cordypyrones A and B, 2 pyrones that show modest activities against pathogenic bacteria including methicillin-resistant Staphylococcus aureus (MRSA), Mycobacterium tuberculosis and Bacillus cereus. The HR-PKS milA catalyzes the formation of cordypyrones A via condensation of one acetate with 10 malonate units. Since milA lacks an enoyl reductase domain, the 2 beta-keto processing domains DH and KR of milA collaborate with the trans-enoyl reductase milB to catalyze the different levels of reduction. The cytochrome P450 monooxygenase milC then hydroxylates the C-22 of cordypyrones A to yield cordypyrones B. The polypeptide is Highly reducing polyketide synthase milA (Cordyceps militaris (strain CM01) (Caterpillar fungus)).